The primary structure comprises 315 residues: Methylglutaconyl-CoA hydratase, mitochondrial (315 aa).

Residues 1–43 constitute a mitochondrion transit peptide; it reads MAAAAAPGALGALSAGRVRLVAACCARLGSAAWARGTAPRRGY. Lys76 is modified (N6-acetyllysine; alternate). Position 76 is an N6-succinyllysine; alternate (Lys76). Residues 81-95 are RNA-binding; the sequence is KNLLKMLSKAVDALK. Lys85 carries the post-translational modification N6-succinyllysine. An N6-acetyllysine; alternate mark is found at Lys89 and Lys120. 2 positions are modified to N6-succinyllysine; alternate: Lys89 and Lys120. Lys124 and Lys136 each carry N6-succinyllysine. N6-acetyllysine; alternate is present on residues Lys180 and Lys187. Residues Lys180 and Lys187 each carry the N6-succinyllysine; alternate modification. Lys305 is modified (N6-succinyllysine).

This sequence belongs to the enoyl-CoA hydratase/isomerase family. Homohexamer.

Its subcellular location is the mitochondrion. The enzyme catalyses (3S)-3-hydroxy-3-methylglutaryl-CoA = 3-methyl-(2E)-glutaconyl-CoA + H2O. It carries out the reaction (3S)-citramalyl-CoA = itaconyl-CoA + H2O. It catalyses the reaction 3-hydroxyisovaleryl-CoA = 3-methylbut-2-enoyl-CoA + H2O. The catalysed reaction is (S)-3-hydroxyglutaryl-CoA = (2E)-glutaconyl-CoA + H2O. Its pathway is amino-acid degradation; L-leucine degradation; (S)-3-hydroxy-3-methylglutaryl-CoA from 3-isovaleryl-CoA: step 3/3. In terms of biological role, catalyzes the fifth step in the leucine degradation pathway, the reversible hydration of 3-methylglutaconyl-CoA (3-MG-CoA) to 3-hydroxy-3-methylglutaryl-CoA (HMG-CoA). Can catalyze the reverse reaction but at a much lower rate in vitro. HMG-CoA is then quickly degraded by another enzyme (such as HMG-CoA lyase) to give acetyl-CoA and acetoacetate. Uses other substrates such as (2E)-glutaconyl-CoA efficiently in vitro, and to a lesser extent 3-methylcrotonyl-CoA (3-methyl-(2E)-butenoyl-CoA), crotonyl-CoA ((2E)-butenoyl-CoA) and 3-hydroxybutanoyl-CoA (the missing carboxylate reduces affinity to the active site). Originally it was identified as an RNA-binding protein as it binds to AU-rich elements (AREs) in vitro. AREs direct rapid RNA degradation and mRNA deadenylation. Might have itaconyl-CoA hydratase activity, converting itaconyl-CoA into citramalyl-CoA in the C5-dicarboxylate catabolism pathway. The C5-dicarboxylate catabolism pathway is required to detoxify itaconate, an antimicrobial metabolite and immunomodulator produced by macrophages during certain infections, that can act as a vitamin B12-poisoning metabolite. The protein is Methylglutaconyl-CoA hydratase, mitochondrial of Rattus norvegicus (Rat).